A 316-amino-acid chain; its full sequence is Olfactory receptor 2H1 (316 aa).

Residues 1 to 23 (MVNQSSPMGFLLLGFSEHPALER) lie on the Extracellular side of the membrane. Asn3 carries N-linked (GlcNAc...) asparagine glycosylation. A helical membrane pass occupies residues 24 to 47 (TLFVVVFTSYLLTLVGNTLIILLS). The Cytoplasmic segment spans residues 48 to 55 (VLYPRLHS). Residues 56–77 (PMYFFLSDLSFLDLCFTTSCVP) form a helical membrane-spanning segment. Residues 78-98 (QMLVNLWGPKKTISFLGCSVQ) are Extracellular-facing. A disulfide bridge links Cys95 with Cys187. The helical transmembrane segment at 99–118 (LFIFLSLGTTECILLTVMAF) threads the bilayer. Residues 119 to 137 (DRYVAVCQPLHYATIIHPR) are Cytoplasmic-facing. Residues 138–156 (LCWQLASVAWVMSLVQSIV) traverse the membrane as a helical segment. Over 157 to 193 (QTPSTLHLPFCPHQQIDDFLCEVPSLIRLSCGDTSYN) the chain is Extracellular. The helical transmembrane segment at 194–217 (EIQLAVSSVIFVVVPLSLILASYG) threads the bilayer. The Cytoplasmic segment spans residues 218–234 (ATAQAVLRINSATAWRK). The chain crosses the membrane as a helical span at residues 235–257 (AFGTCSSHLTVVTLFYSSVIAVY). The Extracellular segment spans residues 258–270 (LQPKNPYAQGRGK). A helical transmembrane segment spans residues 271–290 (FFGLFYAVGTPSLNPLVYTL). At 291–316 (RNKEIKRALRRLLGKERDSRESWRAA) the chain is on the cytoplasmic side.

The protein belongs to the G-protein coupled receptor 1 family.

It localises to the cell membrane. Its function is as follows. Odorant receptor. This chain is Olfactory receptor 2H1 (OR2H1), found in Homo sapiens (Human).